A 403-amino-acid chain; its full sequence is Tyrosine--tRNA ligase (403 aa).

The 'HIGH' region signature appears at 42–51 (PTAPDLHLGH). The 'KMSKS' region motif lies at 226–230 (KMSKS). Lys229 lines the ATP pocket. The S4 RNA-binding domain occupies 336 to 396 (MPISAVLNKA…GKKAFGRITL (61 aa)).

It belongs to the class-I aminoacyl-tRNA synthetase family. TyrS type 2 subfamily. As to quaternary structure, homodimer.

The protein resides in the cytoplasm. It carries out the reaction tRNA(Tyr) + L-tyrosine + ATP = L-tyrosyl-tRNA(Tyr) + AMP + diphosphate + H(+). Its function is as follows. Catalyzes the attachment of tyrosine to tRNA(Tyr) in a two-step reaction: tyrosine is first activated by ATP to form Tyr-AMP and then transferred to the acceptor end of tRNA(Tyr). The chain is Tyrosine--tRNA ligase from Pseudomonas syringae pv. tomato (strain ATCC BAA-871 / DC3000).